Consider the following 304-residue polypeptide: Glycine--tRNA ligase alpha subunit (304 aa).

Belongs to the class-II aminoacyl-tRNA synthetase family. Tetramer of two alpha and two beta subunits.

Its subcellular location is the cytoplasm. It catalyses the reaction tRNA(Gly) + glycine + ATP = glycyl-tRNA(Gly) + AMP + diphosphate. The protein is Glycine--tRNA ligase alpha subunit of Yersinia pseudotuberculosis serotype O:1b (strain IP 31758).